The sequence spans 134 residues: Small ribosomal subunit protein uS9c (134 aa).

It belongs to the universal ribosomal protein uS9 family.

The protein localises to the plastid. The protein resides in the chloroplast. The polypeptide is Small ribosomal subunit protein uS9c (rps9) (Guillardia theta (Cryptophyte)).